The primary structure comprises 249 residues: Caffeoyl-CoA O-methyltransferase 1 (249 aa).

Substrate is bound at residue Lys23. S-adenosyl-L-methionine contacts are provided by residues Thr65, Glu87, 89–90, Ser95, Asp113, and Ala142; that span reads GV. Asp165 is a binding site for substrate. Residue Asp165 coordinates a divalent metal cation. An S-adenosyl-L-methionine-binding site is contributed by Asp167. Residues Asp191 and Asn192 each contribute to the a divalent metal cation site. Asn196 is a binding site for substrate.

Belongs to the class I-like SAM-binding methyltransferase superfamily. Cation-dependent O-methyltransferase family. CCoAMT subfamily. The cofactor is a divalent metal cation. In terms of tissue distribution, mostly expressed in petal limbs and tubes, and, at low levels, in flower buds, stamens, pistils, stems, roots and leaves.

The protein resides in the cytoplasm. It is found in the cytosol. The enzyme catalyses (E)-caffeoyl-CoA + S-adenosyl-L-methionine = (E)-feruloyl-CoA + S-adenosyl-L-homocysteine + H(+). It carries out the reaction (E)-5-hydroxyferuloyl-CoA + S-adenosyl-L-methionine = (E)-sinapoyl-CoA + S-adenosyl-L-homocysteine + H(+). It functions in the pathway aromatic compound metabolism; phenylpropanoid biosynthesis. In terms of biological role, involved in the production of floral volatile phenylpropanoids in flowers of fragrant cultivars (e.g. cv. Mitchell and cv. V26) from cinnamic acid, a common precursor with the anthocyanin biosynthesis pathway involved in flower pigmentation. Methylates caffeoyl-CoA to feruloyl-CoA, also able to methylate 5-hydroxyferuloyl-CoA. The protein is Caffeoyl-CoA O-methyltransferase 1 of Petunia hybrida (Petunia).